Reading from the N-terminus, the 1290-residue chain is Sorbin and SH3 domain-containing protein 1 (1290 aa).

Disordered stretches follow at residues 1–211, 238–271, and 286–313; these read MSSE…LSDV, HKLN…SKSE, and TLPL…KKVD. Over residues 45-61 the composition is skewed to low complexity; sequence SSSYRGTPSSSPVSPQE. T51 carries the post-translational modification Phosphothreonine. Phosphoserine is present on residues S55, S58, and S62. Residues 62 to 71 are compositionally biased toward basic and acidic residues; sequence SPKHESKSGL. Polar residues-rich tracts occupy residues 83-95 and 123-153; these read LSSS…NAQP and EVSS…TIVN. Over residues 161-173 the composition is skewed to basic and acidic residues; the sequence is HNRDPASERRAGE. Residues D164 and D175 each carry the phosphoserine modification. Residue T179 is modified to Phosphothreonine. S185, A194, S204, S209, S254, S261, S270, and P288 each carry phosphoserine. Basic and acidic residues predominate over residues 189–199; that stretch reads ASERRAKDASR. A SoHo domain is found at 202–247; it reads VRSAQDLSDVSTDEVGIPLRNTERSKDWYKTMFKQIHKLNRDDDSD. Residues 240–260 are compositionally biased toward basic and acidic residues; that stretch reads LNRDDDSDVHSPRYSFSDDTK. Over residues 299–313 the composition is skewed to basic and acidic residues; sequence SPERNDWEPLDKKVD. Residue Y325 is modified to Phosphotyrosine; by ABL1. 5 positions are modified to phosphoserine: S345, P346, Y357, S376, and S407. A disordered region spans residues 389–416; that stretch reads VETVNKSPSANSPQSSAVSPTPDITSEP. The span at 392-412 shows a compositional bias: polar residues; it reads VNKSPSANSPQSSAVSPTPDI. At Y421 the chain carries Phosphotyrosine; by ABL1. Phosphoserine occurs at positions 432 and 470. 6 disordered regions span residues 463 to 482, 588 to 607, 697 to 739, 783 to 803, 822 to 841, and 862 to 972; these read LSGL…RKGG, YDSK…SSRR, SLDF…EMDG, VSND…PKHR, RKHE…SRGD, and PLQQ…SPRH. T475 is subject to Phosphothreonine. Composition is skewed to polar residues over residues 595 to 606 and 704 to 722; these read TMSLQEYGTSSR and LSKS…SARS. S969 carries the post-translational modification Phosphoserine. SH3 domains follow at residues 1049-1108 and 1123-1184; these read LEMR…LLPP and LEYG…VLKR. T1189 bears the Phosphothreonine mark. 2 positions are modified to phosphotyrosine: Y1193 and Y1198. Residues 1198–1210 are compositionally biased toward low complexity; the sequence is YSSSPSRSATVSP. The interval 1198–1227 is disordered; it reads YSSSPSRSATVSPQQPQAQQRRVTPDRSQP. Residues S1201 and S1209 each carry the phosphoserine modification. Over residues 1211–1227 the composition is skewed to polar residues; the sequence is QQPQAQQRRVTPDRSQP. In terms of domain architecture, SH3 3 spans 1229–1290; sequence LDLCSYQALY…PGNYVKPLYL (62 aa). Y1238 carries the phosphotyrosine; by ABL1 modification.

In terms of assembly, interacts (via SH3 domain 2) with PXN. Interacts with the long isoform of AFDN and with VCL. AFDN and VCL bind to SORBS1 in a competitive manner and do not form a ternary complex. Interacts with ABL1, CBL, CBLB and INPPL1/SHIP2 through the third SH3 domain. Interaction with ABL1 occurs only after insulin stimulation while this has no effect on the interaction with INPPL1. Interacts with the insulin receptor but dissociates from it following insulin stimulation. Also interacts with SCA7, PTK2/FAK1 and flotillin. Interacts (via third SH3 domain) with the Ten-1 ICD form of TENM1; the interaction induces the translocation of SORBS1 to the nucleus. Interacts with INSM1. In terms of processing, O-glycosylated. In terms of tissue distribution, expressed in all tissues tested: heart, brain, spleen, lung, liver, muscle, kidney and testis. Expressed in 3T3-L1 adipocytes but not in 3T3-L1 fibroblasts.

The protein localises to the cell junction. It localises to the adherens junction. It is found in the cell membrane. Its subcellular location is the cytoplasm. The protein resides in the cytoskeleton. The protein localises to the focal adhesion. It localises to the nucleus. It is found in the nucleus matrix. Functionally, plays a role in tyrosine phosphorylation of CBL by linking CBL to the insulin receptor. Required for insulin-stimulated glucose transport. Involved in formation of actin stress fibers and focal adhesions. The chain is Sorbin and SH3 domain-containing protein 1 from Mus musculus (Mouse).